The following is a 125-amino-acid chain: Putative iron-sulfur cluster insertion protein ErpA 2 (125 aa).

Iron-sulfur cluster contacts are provided by Cys53, Cys117, and Cys119.

Belongs to the HesB/IscA family. In terms of assembly, homodimer. It depends on iron-sulfur cluster as a cofactor.

Its function is as follows. Required for insertion of 4Fe-4S clusters. This is Putative iron-sulfur cluster insertion protein ErpA 2 from Polaromonas naphthalenivorans (strain CJ2).